The primary structure comprises 29 residues: Serum amyloid P-component (29 aa).

The region spanning L6–E29 is the Pentraxin (PTX) domain.

It belongs to the pentraxin family. Homopentamer. Pentraxin (or pentaxin) have a discoid arrangement of 5 non-covalently bound subunits. Ca(2+) serves as cofactor.

It is found in the secreted. The protein is Serum amyloid P-component of Hippoglossus hippoglossus (Atlantic halibut).